A 216-amino-acid chain; its full sequence is ATP phosphoribosyltransferase (216 aa).

This sequence belongs to the ATP phosphoribosyltransferase family. Short subfamily. As to quaternary structure, heteromultimer composed of HisG and HisZ subunits.

It is found in the cytoplasm. The enzyme catalyses 1-(5-phospho-beta-D-ribosyl)-ATP + diphosphate = 5-phospho-alpha-D-ribose 1-diphosphate + ATP. It functions in the pathway amino-acid biosynthesis; L-histidine biosynthesis; L-histidine from 5-phospho-alpha-D-ribose 1-diphosphate: step 1/9. Functionally, catalyzes the condensation of ATP and 5-phosphoribose 1-diphosphate to form N'-(5'-phosphoribosyl)-ATP (PR-ATP). Has a crucial role in the pathway because the rate of histidine biosynthesis seems to be controlled primarily by regulation of HisG enzymatic activity. This is ATP phosphoribosyltransferase from Thiobacillus denitrificans (strain ATCC 25259 / T1).